The sequence spans 256 residues: (R)-S-adenosyl-L-methionine hydrolase (256 aa).

Adenosine-binding residues include Asp-7, His-41, Asp-68, and Asn-183. (R)-S-adenosyl-L-methionine contacts are provided by Asn-183, Tyr-212, Ser-226, Glu-231, Val-234, and Met-236. Residue Val-234 participates in adenosine binding.

This sequence belongs to the SAM hydrolase / SAM-dependent halogenase family. Homotrimer.

The enzyme catalyses (R)-S-adenosyl-L-methionine + H2O = adenosine + L-methionine + H(+). Functionally, catalyzes the hydrolysis of S-adenosyl-L-methionine (SAM) into adenosine and L-methionine. Is likely stereoselective, specifically hydrolyzing (R)-S-adenosyl-L-methionine ((R)-SAM), the inactive form of the ubiquitous cofactor SAM, and not the active form of SAM, (S)-S-adenosyl-L-methionine. Probaly plays a role in preventing accumulation of (R)-S-adenosyl-L-methionine in cells; maintenance of (S)-S-denosyl-L-methionine homochirality is important for cellular health given that the (R)-form is largely inactive as a methyl donor and can function as an inhibitor of methyltransferases. Is unable to mediate a fluorination or chlorination reaction with SAM. The sequence is that of (R)-S-adenosyl-L-methionine hydrolase from Pyrococcus horikoshii (strain ATCC 700860 / DSM 12428 / JCM 9974 / NBRC 100139 / OT-3).